The primary structure comprises 198 residues: Recombination protein RecR (198 aa).

A C4-type zinc finger spans residues cysteine 58–cysteine 73. The Toprim domain occupies serine 81–proline 175.

It belongs to the RecR family.

May play a role in DNA repair. It seems to be involved in an RecBC-independent recombinational process of DNA repair. It may act with RecF and RecO. In Clostridium novyi (strain NT), this protein is Recombination protein RecR.